Here is a 116-residue protein sequence, read N- to C-terminus: Selenoprotein H (116 aa).

Lysine 20 carries the post-translational modification N6-acetyllysine. A cross-link (cysteinyl-selenocysteine (Cys-Sec); redox-active) is located at residues 35-38; that stretch reads CTSU. A non-standard amino acid (selenocysteine) is located at residue selenocysteine 38.

Belongs to the SelWTH family.

May be involved in a redox-related process. The protein is Selenoprotein H of Mus musculus (Mouse).